The following is a 989-amino-acid chain: ATP-dependent 6-phosphofructokinase subunit alpha (989 aa).

Residues 1–585 (MPEPSISDLS…SYENFLSVSK (585 aa)) form an N-terminal catalytic PFK domain 1 region. ATP-binding positions include glycine 220, 283–284 (RC), and 313–316 (GDGS). Aspartate 314 contributes to the Mg(2+) binding site. Beta-D-fructose 6-phosphate contacts are provided by residues 359-361 (SID), arginine 396, 403-405 (MGR), glutamate 460, arginine 487, and 493-496 (HVQR). Aspartate 361 functions as the Proton acceptor in the catalytic mechanism. The tract at residues 586-599 (YDDGSYLVPESSRL) is interdomain linker. The segment at 600-989 (NIAIIHVGAP…LSGRLSIRTT (390 aa)) is C-terminal regulatory PFK domain 2. Beta-D-fructose 2,6-bisphosphate contacts are provided by residues arginine 670, 727–731 (TVSNN), arginine 765, 772–774 (QGG), glutamate 832, arginine 858, 864–867 (HVQQ), and arginine 963.

This sequence belongs to the phosphofructokinase type A (PFKA) family. ATP-dependent PFK group I subfamily. Eukaryotic two domain clade 'E' sub-subfamily. Heterododecamer of 4 alpha, 4 beta and 4 gamma chains. The cofactor is Mg(2+).

It localises to the cytoplasm. It carries out the reaction beta-D-fructose 6-phosphate + ATP = beta-D-fructose 1,6-bisphosphate + ADP + H(+). It participates in carbohydrate degradation; glycolysis; D-glyceraldehyde 3-phosphate and glycerone phosphate from D-glucose: step 3/4. Its activity is regulated as follows. Allosterically activated by ADP, AMP, or fructose 2,6-bisphosphate, and allosterically inhibited by ATP or citrate. Catalyzes the phosphorylation of D-fructose 6-phosphate to fructose 1,6-bisphosphate by ATP, the first committing step of glycolysis. The polypeptide is ATP-dependent 6-phosphofructokinase subunit alpha (PFK1) (Komagataella pastoris (Yeast)).